The primary structure comprises 300 residues: uncharacterized protein (300 aa).

Belongs to the histone deacetylase family.

Functionally, putative deacetylase. This is an uncharacterized protein from Picosynechococcus sp. (strain ATCC 27264 / PCC 7002 / PR-6) (Agmenellum quadruplicatum).